The primary structure comprises 457 residues: tRNA-2-methylthio-N(6)-dimethylallyladenosine synthase (457 aa).

An MTTase N-terminal domain is found at 3–120; sequence KKVYVKTFGC…LPQMIDARRE (118 aa). 6 residues coordinate [4Fe-4S] cluster: cysteine 12, cysteine 49, cysteine 83, cysteine 157, cysteine 161, and cysteine 164. The region spanning 143 to 377 is the Radical SAM core domain; the sequence is RVEGPSAFVS…QATIEENVAR (235 aa). Residues 380–447 form the TRAM domain; sequence QSMLGKVERI…PHSLRGELVL (68 aa).

It belongs to the methylthiotransferase family. MiaB subfamily. As to quaternary structure, monomer. [4Fe-4S] cluster serves as cofactor.

The protein localises to the cytoplasm. It carries out the reaction N(6)-dimethylallyladenosine(37) in tRNA + (sulfur carrier)-SH + AH2 + 2 S-adenosyl-L-methionine = 2-methylsulfanyl-N(6)-dimethylallyladenosine(37) in tRNA + (sulfur carrier)-H + 5'-deoxyadenosine + L-methionine + A + S-adenosyl-L-homocysteine + 2 H(+). Functionally, catalyzes the methylthiolation of N6-(dimethylallyl)adenosine (i(6)A), leading to the formation of 2-methylthio-N6-(dimethylallyl)adenosine (ms(2)i(6)A) at position 37 in tRNAs that read codons beginning with uridine. This is tRNA-2-methylthio-N(6)-dimethylallyladenosine synthase from Burkholderia pseudomallei (strain 1710b).